The following is a 392-amino-acid chain: Integrin-linked kinase-associated serine/threonine phosphatase 2C (392 aa).

Met-1 is subject to N-acetylmethionine. The segment at 1–91 (MDLFGDLPEP…PEEEKNGGEE (91 aa)) is disordered. Over residues 56 to 70 (SGNSGSLATSGSQVV) the composition is skewed to polar residues. Positions 72-91 (TEGKGAKRKAPEEEKNGGEE) are enriched in basic and acidic residues. Residues 108 to 390 (KGYVAERKGE…DNVTVMVVRI (283 aa)) enclose the PPM-type phosphatase domain. Positions 152 and 153 each coordinate Mn(2+). Residue Lys-210 is modified to N6-acetyllysine. Mn(2+)-binding residues include Asp-326 and Asp-381.

The protein belongs to the PP2C family. Interacts with ILK. Mg(2+) is required as a cofactor. The cofactor is Mn(2+).

The protein resides in the cytoplasm. The enzyme catalyses O-phospho-L-seryl-[protein] + H2O = L-seryl-[protein] + phosphate. It carries out the reaction O-phospho-L-threonyl-[protein] + H2O = L-threonyl-[protein] + phosphate. Protein phosphatase that may play a role in regulation of cell cycle progression via dephosphorylation of its substrates whose appropriate phosphorylation states might be crucial for cell proliferation. Selectively associates with integrin linked kinase (ILK), to modulate cell adhesion and growth factor signaling. Inhibits the ILK-GSK3B signaling axis and may play an important role in inhibiting oncogenic transformation. The chain is Integrin-linked kinase-associated serine/threonine phosphatase 2C (Ilkap) from Mus musculus (Mouse).